The following is a 440-amino-acid chain: Elongation factor 1-gamma (440 aa).

N-acetylalanine is present on alanine 2. The GST N-terminal domain maps to 2 to 87; the sequence is AAGTLYTYPE…YVSNEELRGS (86 aa). The GST C-terminal domain occupies 88-216; sequence TPEAAAQVVQ…VKLCEKMAQF (129 aa). Lysine 147 and lysine 212 each carry N6-acetyllysine. The segment covering 221 to 257 has biased composition (basic and acidic residues); that stretch reads FAESQPKKDTPRKEKGSREEKLKPQAERKEGKEEKKA. The segment at 221–267 is disordered; the sequence is FAESQPKKDTPRKEKGSREEKLKPQAERKEGKEEKKAAAPAPEEELD. Residue lysine 256 forms a Glycyl lysine isopeptide (Lys-Gly) (interchain with G-Cter in SUMO1) linkage. The EF-1-gamma C-terminal domain occupies 279 to 440; that stretch reads AKDPFAHLPK…KAFNQGKIFK (162 aa). A Glycyl lysine isopeptide (Lys-Gly) (interchain with G-Cter in SUMO2) cross-link involves residue lysine 288. Residue lysine 404 is modified to N6-acetyllysine. Lysine 437 carries the post-translational modification N6-acetyllysine; alternate. N6-malonyllysine; alternate is present on lysine 437.

In terms of assembly, EF-1 is composed of four subunits: alpha, beta, delta, and gamma.

Functionally, probably plays a role in anchoring the complex to other cellular components. The protein is Elongation factor 1-gamma (EEF1G) of Bos taurus (Bovine).